Reading from the N-terminus, the 238-residue chain is 3-dehydroquinate dehydratase (238 aa).

3-dehydroquinate contacts are provided by residues 35 to 37 and arginine 70; that span reads ELR. Histidine 133 acts as the Proton donor/acceptor in catalysis. Residue lysine 160 is the Schiff-base intermediate with substrate of the active site. 2 residues coordinate 3-dehydroquinate: arginine 202 and glutamine 225.

Belongs to the type-I 3-dehydroquinase family. As to quaternary structure, homodimer.

It carries out the reaction 3-dehydroquinate = 3-dehydroshikimate + H2O. It participates in metabolic intermediate biosynthesis; chorismate biosynthesis; chorismate from D-erythrose 4-phosphate and phosphoenolpyruvate: step 3/7. Involved in the third step of the chorismate pathway, which leads to the biosynthesis of aromatic amino acids. Catalyzes the cis-dehydration of 3-dehydroquinate (DHQ) and introduces the first double bond of the aromatic ring to yield 3-dehydroshikimate. The chain is 3-dehydroquinate dehydratase from Staphylococcus aureus (strain MRSA252).